Here is a 310-residue protein sequence, read N- to C-terminus: ADP-L-glycero-D-manno-heptose-6-epimerase (310 aa).

Residues 10–11 (FI), 31–32 (DN), Lys-38, Lys-53, 75–79 (EGACS), and Asn-92 contribute to the NADP(+) site. Tyr-140 functions as the Proton acceptor in the catalytic mechanism. Position 144 (Lys-144) interacts with NADP(+). Asn-169 contacts substrate. 2 residues coordinate NADP(+): Val-170 and Lys-178. The active-site Proton acceptor is Lys-178. Substrate is bound by residues Ser-180, His-187, 201 to 204 (FEGS), Arg-209, and Tyr-272.

It belongs to the NAD(P)-dependent epimerase/dehydratase family. HldD subfamily. In terms of assembly, homopentamer. It depends on NADP(+) as a cofactor.

It catalyses the reaction ADP-D-glycero-beta-D-manno-heptose = ADP-L-glycero-beta-D-manno-heptose. It participates in nucleotide-sugar biosynthesis; ADP-L-glycero-beta-D-manno-heptose biosynthesis; ADP-L-glycero-beta-D-manno-heptose from D-glycero-beta-D-manno-heptose 7-phosphate: step 4/4. Functionally, catalyzes the interconversion between ADP-D-glycero-beta-D-manno-heptose and ADP-L-glycero-beta-D-manno-heptose via an epimerization at carbon 6 of the heptose. The sequence is that of ADP-L-glycero-D-manno-heptose-6-epimerase from Cronobacter sakazakii (strain ATCC BAA-894) (Enterobacter sakazakii).